The primary structure comprises 118 residues: Large ribosomal subunit protein bL19 (118 aa).

The protein belongs to the bacterial ribosomal protein bL19 family.

Functionally, this protein is located at the 30S-50S ribosomal subunit interface and may play a role in the structure and function of the aminoacyl-tRNA binding site. This Salinispora tropica (strain ATCC BAA-916 / DSM 44818 / JCM 13857 / NBRC 105044 / CNB-440) protein is Large ribosomal subunit protein bL19.